Consider the following 251-residue polypeptide: NADPH-dependent oxidoreductase (251 aa).

Belongs to the flavin oxidoreductase frp family. It depends on FMN as a cofactor.

Functionally, reduces FMN, organic nitro compounds and disulfide DTNB. Involved in maintenance of the cellular redox state and the disulfide stress response. This Staphylococcus aureus (strain MRSA252) protein is NADPH-dependent oxidoreductase (nfrA).